The sequence spans 524 residues: Bifunctional purine biosynthesis protein PurH (524 aa).

One can recognise an MGS-like domain in the interval 1–144 (MTRRALVSVS…KNSAHVGVVV (144 aa)).

The protein belongs to the PurH family.

The catalysed reaction is (6R)-10-formyltetrahydrofolate + 5-amino-1-(5-phospho-beta-D-ribosyl)imidazole-4-carboxamide = 5-formamido-1-(5-phospho-D-ribosyl)imidazole-4-carboxamide + (6S)-5,6,7,8-tetrahydrofolate. The enzyme catalyses IMP + H2O = 5-formamido-1-(5-phospho-D-ribosyl)imidazole-4-carboxamide. The protein operates within purine metabolism; IMP biosynthesis via de novo pathway; 5-formamido-1-(5-phospho-D-ribosyl)imidazole-4-carboxamide from 5-amino-1-(5-phospho-D-ribosyl)imidazole-4-carboxamide (10-formyl THF route): step 1/1. It participates in purine metabolism; IMP biosynthesis via de novo pathway; IMP from 5-formamido-1-(5-phospho-D-ribosyl)imidazole-4-carboxamide: step 1/1. The chain is Bifunctional purine biosynthesis protein PurH from Anaeromyxobacter dehalogenans (strain 2CP-1 / ATCC BAA-258).